The chain runs to 84 residues: Toxin CsE9 (84 aa).

Residues 1 to 19 (MNSLLMITTCLILIGTVLA) form the signal peptide. Residues 20 to 83 (EDGYLFDKRK…ISRTPGKTCK (64 aa)) form the LCN-type CS-alpha/beta domain. 4 disulfides stabilise this stretch: Cys31-Cys82, Cys35-Cys58, Cys44-Cys63, and Cys48-Cys65.

This sequence belongs to the long (4 C-C) scorpion toxin superfamily. Sodium channel inhibitor family. Beta subfamily. As to expression, expressed by the venom gland.

The protein localises to the secreted. Its function is as follows. Beta toxins bind voltage-independently at site-4 of sodium channels (Nav) and shift the voltage of activation toward more negative potentials thereby affecting sodium channel activation and promoting spontaneous and repetitive firing. This Centruroides sculpturatus (Arizona bark scorpion) protein is Toxin CsE9.